The following is a 365-amino-acid chain: NAC domain-containing protein 43 (365 aa).

An NAC domain is found at 16–180 (VPPGFRFHPT…GWVVCRIFKK (165 aa)). The DNA-binding element occupies 116 to 186 (IGMRKTLVFY…IFKKKNLHKT (71 aa)).

As to expression, expressed in various aboveground tissues undergoing thickening of the lignified secondary wall such as anthers, filaments of stamens, the base of carpels, styles, the boundaries between siliques and pedicels, the midrib of leaf veins, and inflorescence stems, specifically in interfascicular fibers (sclerenchyma), cells differentiating into vascular vessels, and xylary fibers (secondary xylem).

Its subcellular location is the nucleus. In terms of biological role, transcription activator of genes involved in biosynthesis of secondary walls. Together with NST2 and NST3, required for the secondary cell wall thickening of sclerenchymatous fibers, secondary xylem (tracheary elements), and of the anther endocethium, which is necessary for anther dehiscence. May also regulate the secondary cell wall lignification of other tissues. This Arabidopsis thaliana (Mouse-ear cress) protein is NAC domain-containing protein 43 (NAC043).